The following is a 364-amino-acid chain: N-alpha-acetyltransferase 30 (364 aa).

Over residues 1-18 the composition is skewed to pro residues; it reads MAEVPPGPSSLLPPPAPA. Disordered stretches follow at residues 1–21, 39–65, and 110–164; these read MAEV…AAPA, SEDE…TSAK, and EAAA…SDPA. A phosphoserine mark is found at Ser39 and Ser54. Residues 39-48 show a composition bias toward acidic residues; it reads SEDEEDDEEH. Over residues 126 to 135 the composition is skewed to basic and acidic residues; sequence AEGHPGERPP. The span at 152–164 shows a compositional bias: low complexity; it reads AAAAAAGAASDPA. 3 positions are modified to phosphoserine: Ser192, Ser198, and Ser201. Residues 216 to 364 enclose the N-acetyltransferase domain; sequence RYVRYESELQ…DALRLKLWLR (149 aa). Lys235 bears the N6-acetyllysine mark.

It belongs to the acetyltransferase family. MAK3 subfamily. As to quaternary structure, component of the N-terminal acetyltransferase C (NatC) complex, which is composed of NAA35, NAA38 and NAA30.

It localises to the cytoplasm. The protein resides in the nucleus. It carries out the reaction N-terminal L-methionyl-L-leucyl-[protein] + acetyl-CoA = N-terminal N(alpha)-acetyl-L-methionyl-L-leucyl-[protein] + CoA + H(+). The catalysed reaction is N-terminal L-methionyl-L-isoleucyl-[protein] + acetyl-CoA = N-terminal N(alpha)-acetyl-L-methionyl-L-isoleucyl-[protein] + CoA + H(+). It catalyses the reaction N-terminal L-methionyl-L-phenylalanyl-[protein] + acetyl-CoA = N-terminal N(alpha)-acetyl-L-methionyl-L-phenylalanyl-[protein] + CoA + H(+). The enzyme catalyses N-terminal L-methionyl-L-tryptophyl-[protein] + acetyl-CoA = N-terminal N(alpha)-acetyl-L-methionyl-L-tryptophyl-[protein] + CoA + H(+). It carries out the reaction N-terminal L-methionyl-L-tyrosyl-[protein] + acetyl-CoA = N-terminal N(alpha)-acetyl-L-methionyl-L-tyrosyl-[protein] + CoA + H(+). Functionally, catalytic subunit of the N-terminal acetyltransferase C (NatC) complex. Catalyzes acetylation of the N-terminal methionine residues of peptides beginning with Met-Leu-Ala and Met-Leu-Gly. N-terminal acetylation protects proteins from ubiquitination and degradation by the N-end rule pathway. Necessary for the lysosomal localization and function of ARL8B sugeesting that ARL8B is a NatC substrate. The chain is N-alpha-acetyltransferase 30 (Naa30) from Mus musculus (Mouse).